Here is a 139-residue protein sequence, read N- to C-terminus: Cystatin-11 (139 aa).

The N-terminal stretch at 1 to 28 (MAAGSWKATRLLLAILVALVAFSYQVKR) is a signal peptide. Disulfide bonds link Cys94–Cys102 and Cys115–Cys135. Asn134 carries an N-linked (GlcNAc...) asparagine glycan.

It belongs to the cystatin family. In terms of tissue distribution, expressed in epididymis, where it localizes to the proximal caput and also part of the midcaput. Not detected in other tissues tested.

The protein localises to the secreted. In terms of biological role, has antibacterial activity against the Gram-negative bacteria E.coli. May play a role in sperm maturation and fertilization. This chain is Cystatin-11, found in Mus musculus (Mouse).